A 196-amino-acid chain; its full sequence is dTTP/UTP pyrophosphatase (196 aa).

The active-site Proton acceptor is Asp75.

This sequence belongs to the Maf family. YhdE subfamily. Requires a divalent metal cation as cofactor.

It is found in the cytoplasm. The catalysed reaction is dTTP + H2O = dTMP + diphosphate + H(+). It carries out the reaction UTP + H2O = UMP + diphosphate + H(+). Functionally, nucleoside triphosphate pyrophosphatase that hydrolyzes dTTP and UTP. May have a dual role in cell division arrest and in preventing the incorporation of modified nucleotides into cellular nucleic acids. The polypeptide is dTTP/UTP pyrophosphatase (Wolbachia pipientis subsp. Culex pipiens (strain wPip)).